The chain runs to 147 residues: MVDFTAEEKAAITRLWGKMNVEEAGGKALGRLLIVYPWTQRFFDNFGNLSSASAIMGNPKVKAHGKKVLNSFGDAVKNPDNLKGTFAKLSELHCDKLLVDSENFRLLGNVLVIVLANHFGKEFTPQVQAAWQKMATGVASAVARKYH.

The Globin domain occupies 3 to 147; sequence DFTAEEKAAI…VASAVARKYH (145 aa). Positions 64 and 93 each coordinate heme b.

This sequence belongs to the globin family. As to quaternary structure, heterotetramer of two alpha chains and two gamma chains in fetal hemoglobin (Hb F). Red blood cells.

Functionally, gamma chains make up the fetal hemoglobin F, in combination with alpha chains. The chain is Hemoglobin subunit gamma (HBG) from Trichechus manatus (Caribbean manatee).